The primary structure comprises 290 residues: Transcription cofactor vestigial-like protein 4 (290 aa).

Residue Met1 is modified to N-acetylmethionine. A compositionally biased stretch (basic and acidic residues) spans 17–30 (ADDEKREAALRGEP). Disordered stretches follow at residues 17 to 65 (ADDE…PGDE), 85 to 106 (LNKT…SPIE), 140 to 161 (LDAS…QQNR), and 254 to 290 (AAKD…SVVS). Ser52 carries the phosphoserine modification. The span at 92–105 (DCRRDPRERSRSPI) shows a compositional bias: basic and acidic residues. Position 149 is a phosphoserine (Ser149). Polar residues predominate over residues 150 to 161 (PTLTPGERQQNR). Thr153 carries the post-translational modification Phosphothreonine. The span at 272–290 (PASPSAHMVSHSHSPSVVS) shows a compositional bias: low complexity. Phosphoserine is present on Ser274.

Belongs to the vestigial family. Interacts with TEFs. Interacts with IRF2BP2.

The protein localises to the nucleus. Functionally, may act as a specific coactivator for the mammalian TEFs. This is Transcription cofactor vestigial-like protein 4 from Homo sapiens (Human).